Here is an 81-residue protein sequence, read N- to C-terminus: Protein K6 (81 aa).

The protein belongs to the poxviridae K6 protein family.

The polypeptide is Protein K6 (Homo sapiens (Human)).